The chain runs to 172 residues: Bacilliredoxin SRU_0242 (172 aa).

Residues 141–172 (TDEAPPSDAPSRPDLSSSPNAGGLPSTFQSIS) are disordered. The span at 154–172 (DLSSSPNAGGLPSTFQSIS) shows a compositional bias: polar residues.

The protein belongs to the bacilliredoxin family.

The sequence is that of Bacilliredoxin SRU_0242 from Salinibacter ruber (strain DSM 13855 / M31).